The chain runs to 361 residues: MNIDEKIKLITRNTDEVITIDELKKKLEENSKLKGYIGFEPSGLFHIGWLIWAQKLKDLIKAGVDMSILVATWHAMINDKLGGDLEKIKLAGKYALEVLEGFGVDMSKLKVVYAEDLVENIDYWSLVVKVAKNTSLARMKRALTIMGRRSEEAELDTSKLIYPAMQVSDIFFQDLDIALGGTDQRKAHMLARDVAEKLQRKKVIAIHTPLLVGLQGGQRMNTEGLEEDDYLATIKMSKSKPETAIFIHDSPELVESKLKNSYCPKGVVNDNPVLQINKYIIFGEQGVTLKIERDTKYGGDIEIKSYEELERIFIEGKLHPLDLKLATARKLNDILDPIRKRISSKSQFVDLISSIEKSITR.

Residues Y36, Y162, Q166, D169, and Q184 each coordinate L-tyrosine. Positions K235–S239 match the 'KMSKS' region motif. K238 lines the ATP pocket.

Belongs to the class-I aminoacyl-tRNA synthetase family. TyrS type 4 subfamily. In terms of assembly, homodimer.

It localises to the cytoplasm. It catalyses the reaction tRNA(Tyr) + L-tyrosine + ATP = L-tyrosyl-tRNA(Tyr) + AMP + diphosphate + H(+). Functionally, catalyzes the attachment of tyrosine to tRNA(Tyr) in a two-step reaction: tyrosine is first activated by ATP to form Tyr-AMP and then transferred to the acceptor end of tRNA(Tyr). The chain is Tyrosine--tRNA ligase from Sulfolobus acidocaldarius (strain ATCC 33909 / DSM 639 / JCM 8929 / NBRC 15157 / NCIMB 11770).